The sequence spans 307 residues: MAAQDKYKFVFTAKEAASEGVTEPIRLPKLIRKAMSLARGPISKYKVGAVGRASSGRVYLGVNVEFPGLPLHHSIHPEQFLVTNLALNSEKGLRQLAVAISSDCIEFGAPCGNCRQFLMETSNELDIKILLKSKHEAEGSFSSLKLLLPYRFTPDDVLPKGSPLLLEKRDNCLTLSGSTEEICSSDCSHLKCKALAAANNSFSPYTESPSGVALQDDEGKWYRGWYIESVAYSPSLGPVQAALVDFVARSRGKGFNKIVEAVLVEKNNARVSQERTAKMILDTIAAPNCDFKVFHCYVDLQKKFITE.

CMP/dCMP-type deaminase domains lie at Thr22–Asp155 and Ser185–Glu307. Asn63–Glu65 contributes to the substrate binding site. Residue His76 participates in Zn(2+) binding. Residue Glu78 is the Proton donor of the active site. Zn(2+) is bound by residues Cys111 and Cys114.

Belongs to the cytidine and deoxycytidylate deaminase family. As to quaternary structure, homodimer. It depends on Zn(2+) as a cofactor.

The enzyme catalyses cytidine + H2O + H(+) = uridine + NH4(+). It catalyses the reaction 2'-deoxycytidine + H2O + H(+) = 2'-deoxyuridine + NH4(+). Functionally, this enzyme scavenges exogenous and endogenous cytidine and 2'-deoxycytidine for UMP synthesis. The chain is Cytidine deaminase 7 (CDA7) from Arabidopsis thaliana (Mouse-ear cress).